The primary structure comprises 149 residues: Probable glycine cleavage system H protein 2 (149 aa).

Positions 32-114 constitute a Lipoyl-binding domain; that stretch reads IAVVGITDLA…YGQGWIAKIK (83 aa). Lys-73 is subject to N6-lipoyllysine.

The protein belongs to the GcvH family. In terms of assembly, the glycine cleavage system is composed of four proteins: P, T, L and H. The cofactor is (R)-lipoate.

In terms of biological role, the glycine cleavage system catalyzes the degradation of glycine. The H protein shuttles the methylamine group of glycine from the P protein to the T protein. The polypeptide is Probable glycine cleavage system H protein 2 (Sulfolobus acidocaldarius (strain ATCC 33909 / DSM 639 / JCM 8929 / NBRC 15157 / NCIMB 11770)).